Reading from the N-terminus, the 863-residue chain is DNA mismatch repair protein MutS (863 aa).

Residue 615-622 (GPNMAGKS) participates in ATP binding.

It belongs to the DNA mismatch repair MutS family.

This protein is involved in the repair of mismatches in DNA. It is possible that it carries out the mismatch recognition step. This protein has a weak ATPase activity. The protein is DNA mismatch repair protein MutS of Pelotomaculum thermopropionicum (strain DSM 13744 / JCM 10971 / SI).